A 278-amino-acid chain; its full sequence is Ribosomal RNA small subunit methyltransferase A (278 aa).

The S-adenosyl-L-methionine site is built by asparagine 25, leucine 27, glycine 52, glutamate 73, aspartate 97, and asparagine 117.

It belongs to the class I-like SAM-binding methyltransferase superfamily. rRNA adenine N(6)-methyltransferase family. RsmA subfamily.

The protein localises to the cytoplasm. The catalysed reaction is adenosine(1518)/adenosine(1519) in 16S rRNA + 4 S-adenosyl-L-methionine = N(6)-dimethyladenosine(1518)/N(6)-dimethyladenosine(1519) in 16S rRNA + 4 S-adenosyl-L-homocysteine + 4 H(+). Functionally, specifically dimethylates two adjacent adenosines (A1518 and A1519) in the loop of a conserved hairpin near the 3'-end of 16S rRNA in the 30S particle. May play a critical role in biogenesis of 30S subunits. The protein is Ribosomal RNA small subunit methyltransferase A of Desulfitobacterium hafniense (strain DSM 10664 / DCB-2).